The primary structure comprises 297 residues: Probable transcription factor vicR (297 aa).

Disordered stretches follow at residues 45-80 and 100-134; these read LPGL…HSET and TNQA…KNVH. A compositionally biased stretch (basic and acidic residues) spans 58-67; it reads QKEEMRRKNA. The span at 69 to 80 shows a compositional bias: polar residues; sequence AQMQNDSNHSET. The span at 110–124 shows a compositional bias: basic and acidic residues; sequence RSREDITNSRAERHS.

Its subcellular location is the nucleus. Its function is as follows. Probable transcription factor; part of the gene cluster that mediates the biosynthesis of the secondary metabolite victorin, the molecular basis for Victoria blight of oats. May play a role in the regulation of the production of victorin. This is Probable transcription factor vicR from Bipolaris victoriae (strain FI3) (Victoria blight of oats agent).